The chain runs to 603 residues: Elongation factor 4 (603 aa).

The region spanning 7-189 is the tr-type G domain; the sequence is SHIRNFSIIA…SIVHLVPPPR (183 aa). Residues 19-24 and 136-139 each bind GTP; these read DHGKST and NKID.

It belongs to the TRAFAC class translation factor GTPase superfamily. Classic translation factor GTPase family. LepA subfamily.

The protein resides in the cell inner membrane. It carries out the reaction GTP + H2O = GDP + phosphate + H(+). In terms of biological role, required for accurate and efficient protein synthesis under certain stress conditions. May act as a fidelity factor of the translation reaction, by catalyzing a one-codon backward translocation of tRNAs on improperly translocated ribosomes. Back-translocation proceeds from a post-translocation (POST) complex to a pre-translocation (PRE) complex, thus giving elongation factor G a second chance to translocate the tRNAs correctly. Binds to ribosomes in a GTP-dependent manner. The protein is Elongation factor 4 of Thermosynechococcus vestitus (strain NIES-2133 / IAM M-273 / BP-1).